We begin with the raw amino-acid sequence, 325 residues long: Zinc finger C2HC domain-containing protein 1A (325 aa).

The C2HC/C3H-type 1 zinc-finger motif lies at 15–44 (ELLPCKICGRTFFPVALKKHGPICQKTATK). Zn(2+) is bound by residues cysteine 19, cysteine 22, histidine 34, and cysteine 38. The tract at residues 43-83 (TKKRKTFDSSRQRAEGTDIPTVKPLKPRPEPPKKPSNWRRK) is disordered. Residues 48–58 (TFDSSRQRAEG) show a composition bias toward basic and acidic residues. Residues 118–147 (DYIQCPYCQRRFNENAADRHINFCKEQAAR) form a C2HC/C3H-type 2 zinc finger. Zn(2+) is bound by residues cysteine 122, cysteine 125, histidine 137, and cysteine 141. Positions 150–260 (NKGKFSTDTK…NPAPGVLTNK (111 aa)) are disordered. Low complexity-rich tracts occupy residues 177 to 188 (SNSPGTASSGSS) and 197 to 216 (GKTVVGVPSGKVSSSSSSLG). Position 223 is a phosphoserine (serine 223). Threonine 244 carries the post-translational modification Phosphothreonine. Position 292 is a phosphoserine (serine 292).

It belongs to the ZC2HC1 family. The cofactor is Zn(2+).

This Homo sapiens (Human) protein is Zinc finger C2HC domain-containing protein 1A (ZC2HC1A).